We begin with the raw amino-acid sequence, 227 residues long: MICOS complex subunit Mic19 (227 aa).

Gly2 is lipidated: N-myristoyl glycine. Ser29 is modified (phosphoserine). The segment at 32–57 (VIDRMKESSPSGSKSQRYSSVYGASV) is disordered. Polar residues predominate over residues 39-50 (SSPSGSKSQRYS). Phosphotyrosine is present on Tyr49. Phosphoserine occurs at positions 50, 51, 56, and 58. The disordered stretch occupies residues 73–92 (EQAKKESEHQRRLKQARDLE). Lys142 is modified (N6-acetyllysine). A CHCH domain is found at 180–222 (HPVCADLQTKILQCYRQNTQQTLSCSALASQYMHCVNHAKQSM). 2 consecutive short sequence motifs (cx9C motif) follow at residues 183–193 (CADLQTKILQC) and 204–214 (CSALASQYMHC). 2 disulfides stabilise this stretch: Cys183–Cys214 and Cys193–Cys204.

It belongs to the MICOS complex subunit Mic19 family. Metazoan Mic19 subfamily. As to quaternary structure, component of the mitochondrial contact site and cristae organizing system (MICOS) complex, composed of at least MICOS10/MIC10, CHCHD3/MIC19, CHCHD6/MIC25, APOOL/MIC27, IMMT/MIC60, APOO/MIC23/MIC26 and MICOS13/MIC13. This complex was also known under the names MINOS or MitOS complex. The MICOS complex associates with mitochondrial outer membrane proteins SAMM50, MTX1 and MTX2 (together described as components of the mitochondrial outer membrane sorting assembly machinery (SAM) complex) and DNAJC11, mitochondrial inner membrane protein TMEM11 and with HSPA9. The MICOS and SAM complexes together with DNAJC11 are part of a large protein complex spanning both membranes termed the mitochondrial intermembrane space bridging (MIB) complex. Interacts with HSPA1A/HSPA1B and OPA1, preferentially with the soluble OPA1 form.

Its subcellular location is the mitochondrion inner membrane. It localises to the cytoplasm. It is found in the nucleus. The protein localises to the mitochondrion. Functionally, component of the MICOS complex, a large protein complex of the mitochondrial inner membrane that plays crucial roles in the maintenance of crista junctions, inner membrane architecture, and formation of contact sites to the outer membrane. Has also been shown to function as a transcription factor which binds to the BAG1 promoter and represses BAG1 transcription. Plays an important role in the maintenance of the MICOS complex stability and the mitochondrial cristae morphology. The chain is MICOS complex subunit Mic19 (Chchd3) from Mus musculus (Mouse).